Here is a 218-residue protein sequence, read N- to C-terminus: Phosphoglycolate phosphatase (218 aa).

The active-site Nucleophile is the D7. 3 residues coordinate Mg(2+): D7, D9, and D167.

Belongs to the HAD-like hydrolase superfamily. CbbY/CbbZ/Gph/YieH family. Mg(2+) serves as cofactor.

The catalysed reaction is 2-phosphoglycolate + H2O = glycolate + phosphate. It functions in the pathway organic acid metabolism; glycolate biosynthesis; glycolate from 2-phosphoglycolate: step 1/1. Its function is as follows. Specifically catalyzes the dephosphorylation of 2-phosphoglycolate. Is involved in the dissimilation of the intracellular 2-phosphoglycolate formed during the DNA repair of 3'-phosphoglycolate ends, a major class of DNA lesions induced by oxidative stress. This Cereibacter sphaeroides (strain ATCC 17029 / ATH 2.4.9) (Rhodobacter sphaeroides) protein is Phosphoglycolate phosphatase.